A 142-amino-acid chain; its full sequence is ATP synthase epsilon chain (142 aa).

Belongs to the ATPase epsilon chain family. In terms of assembly, F-type ATPases have 2 components, CF(1) - the catalytic core - and CF(0) - the membrane proton channel. CF(1) has five subunits: alpha(3), beta(3), gamma(1), delta(1), epsilon(1). CF(0) has three main subunits: a, b and c.

Its subcellular location is the cell inner membrane. Produces ATP from ADP in the presence of a proton gradient across the membrane. This Shewanella sp. (strain ANA-3) protein is ATP synthase epsilon chain.